The sequence spans 441 residues: Gluconate 2-dehydrogenase cytochrome c subunit (441 aa).

An N-terminal signal peptide occupies residues 1–19 (MMKSILALVLGTLSFAALA). 3 consecutive Cytochrome c domains span residues 26–129 (ALVK…MHGV), 173–289 (PVLA…KSLG), and 312–403 (DDSQ…RGSW). Positions 40, 43, 44, 188, 191, 192, 325, 328, and 329 each coordinate heme c.

Heterotrimer. The cofactor is FAD. Binds 3 heme c groupd covalently per subunit.

Its subcellular location is the cell membrane. The enzyme catalyses D-gluconate + A = 2-dehydro-D-gluconate + AH2. Part of the heterotrimer that catalyzes the conversion of D-gluconate to 2-dehydro-D-gluconate. The protein is Gluconate 2-dehydrogenase cytochrome c subunit of Pantoea cypripedii (Pectobacterium cypripedii).